A 150-amino-acid polypeptide reads, in one-letter code: Multiprotein-bridging factor 1 (150 aa).

The tract at residues 36-71 is disordered; it reads SSESKGAGQSKGPADHQRIAKLDRDDAPKPPEKVSA. Residues 48 to 70 are compositionally biased toward basic and acidic residues; that stretch reads PADHQRIAKLDRDDAPKPPEKVS. One can recognise an HTH cro/C1-type domain in the interval 84-137; the sequence is IKNAEGKSMTQKELATSVNAKPQDIADLESGRAVPDQALLGKLERKLNVKLRGA. The H-T-H motif DNA-binding region spans 94–113; it reads QKELATSVNAKPQDIADLES.

This sequence belongs to the MBF1 family.

Transcriptional coactivator that stimulates GCN4-dependent transcriptional activity by bridging the DNA-binding region of GCN4 and TBP (SPT15), thereby recruiting TBP to GCN4-bound promoters. Involved in induction of the ribosome quality control (RQC) pathway; a pathway that degrades nascent peptide chains during problematic translation. Required to prevent stalled ribosomes from frameshifting. This chain is Multiprotein-bridging factor 1 (MBF1), found in Cryptococcus neoformans var. neoformans serotype D (strain B-3501A) (Filobasidiella neoformans).